The following is a 539-amino-acid chain: uncharacterized protein (539 aa).

An FAD-binding site is contributed by 6-20 (LIIGGGGAAARAAIE). Residues H227 and R243 contribute to the active site.

It belongs to the FAD-dependent oxidoreductase 2 family. FRD/SDH subfamily. FAD serves as cofactor.

This is an uncharacterized protein from Methanocaldococcus jannaschii (strain ATCC 43067 / DSM 2661 / JAL-1 / JCM 10045 / NBRC 100440) (Methanococcus jannaschii).